The sequence spans 121 residues: Large ribosomal subunit protein bL12 (121 aa).

This sequence belongs to the bacterial ribosomal protein bL12 family. In terms of assembly, homodimer. Part of the ribosomal stalk of the 50S ribosomal subunit. Forms a multimeric L10(L12)X complex, where L10 forms an elongated spine to which 2 to 4 L12 dimers bind in a sequential fashion. Binds GTP-bound translation factors.

Its function is as follows. Forms part of the ribosomal stalk which helps the ribosome interact with GTP-bound translation factors. Is thus essential for accurate translation. This Streptococcus uberis (strain ATCC BAA-854 / 0140J) protein is Large ribosomal subunit protein bL12.